The chain runs to 263 residues: Thiazole synthase (263 aa).

Lys102 acts as the Schiff-base intermediate with DXP in catalysis. Residues Gly164, 190–191 (AG), and 212–213 (NT) each bind 1-deoxy-D-xylulose 5-phosphate.

It belongs to the ThiG family. Homotetramer. Forms heterodimers with either ThiH or ThiS.

It is found in the cytoplasm. The enzyme catalyses [ThiS sulfur-carrier protein]-C-terminal-Gly-aminoethanethioate + 2-iminoacetate + 1-deoxy-D-xylulose 5-phosphate = [ThiS sulfur-carrier protein]-C-terminal Gly-Gly + 2-[(2R,5Z)-2-carboxy-4-methylthiazol-5(2H)-ylidene]ethyl phosphate + 2 H2O + H(+). It participates in cofactor biosynthesis; thiamine diphosphate biosynthesis. Its function is as follows. Catalyzes the rearrangement of 1-deoxy-D-xylulose 5-phosphate (DXP) to produce the thiazole phosphate moiety of thiamine. Sulfur is provided by the thiocarboxylate moiety of the carrier protein ThiS. In vitro, sulfur can be provided by H(2)S. This chain is Thiazole synthase, found in Helicobacter hepaticus (strain ATCC 51449 / 3B1).